The sequence spans 313 residues: Intelectin-1 (313 aa).

Positions 1–18 (MNQLSFLLFLIATTRGWS) are cleaved as a signal peptide. Positions 32–255 (SSSPSLPRSC…AANALCAGMR (224 aa)) constitute a Fibrinogen C-terminal domain. A disulfide bridge connects residues cysteine 41 and cysteine 70. Positions 86, 87, 89, 92, 97, 98, and 133 each coordinate Ca(2+). 3 disulfides stabilise this stretch: cysteine 94–cysteine 280, cysteine 199–cysteine 259, and cysteine 251–cysteine 265. N-linked (GlcNAc...) asparagine glycosylation occurs at asparagine 163. Positions 260, 262, 274, and 282 each coordinate Ca(2+). Residues 262–263 (EH) and glutamate 274 each bind a carbohydrate. Serine 298 is lipidated: GPI-anchor amidated serine. A propeptide spanning residues 299 to 313 (SSREITEAAVLLFYR) is cleaved from the precursor.

In terms of assembly, homotrimer; disulfide-linked. May interact with LTF. Post-translationally, N-glycosylated. Highly expressed in omental adipose tissue where it is found in stromal vascular cells but not in fat cells but is barely detectable in subcutaneous adipose tissue (at protein level). Highly expressed in the small intestine. Also found in the heart, testis, colon, salivary gland, skeletal muscle, pancreas and thyroid and, to a lesser degree, in the uterus, spleen, prostate, lymph node and thymus.

It is found in the cell membrane. The protein localises to the secreted. Lectin that specifically recognizes microbial carbohydrate chains in a calcium-dependent manner. Binds to microbial glycans that contain a terminal acyclic 1,2-diol moiety, including beta-linked D-galactofuranose (beta-Galf), D-phosphoglycerol-modified glycans, D-glycero-D-talo-oct-2-ulosonic acid (KO) and 3-deoxy-D-manno-oct-2-ulosonic acid (KDO). Binds to glycans from Gram-positive and Gram-negative bacteria, including K.pneumoniae, S.pneumoniae, Y.pestis, P.mirabilis and P.vulgaris. Does not bind human glycans. Probably plays a role in the defense system against microorganisms. May function as adipokine that has no effect on basal glucose uptake but enhances insulin-stimulated glucose uptake in adipocytes. Increases AKT phosphorylation in the absence and presence of insulin. May interact with lactoferrin/LTF and increase its uptake, and may thereby play a role in iron absorption. This is Intelectin-1 (ITLN1) from Homo sapiens (Human).